Here is a 332-residue protein sequence, read N- to C-terminus: Malate dehydrogenase, cytoplasmic (332 aa).

NAD(+) is bound by residues 16-17 (QI), aspartate 43, and glycine 90. Position 99 (arginine 99) interacts with oxaloacetate. Glutamine 113 and asparagine 132 together coordinate NAD(+). Residues asparagine 132, arginine 163, histidine 188, and serine 243 each coordinate oxaloacetate. Histidine 188 acts as the Proton acceptor in catalysis.

This sequence belongs to the LDH/MDH superfamily. MDH type 2 family. As to quaternary structure, homodimer.

It is found in the cytoplasm. It carries out the reaction (S)-malate + NAD(+) = oxaloacetate + NADH + H(+). The polypeptide is Malate dehydrogenase, cytoplasmic (NR1) (Beta vulgaris (Sugar beet)).